Reading from the N-terminus, the 299-residue chain is ATP phosphoribosyltransferase (299 aa).

It belongs to the ATP phosphoribosyltransferase family. Long subfamily. As to quaternary structure, equilibrium between an active dimeric form, an inactive hexameric form and higher aggregates. Interconversion between the various forms is largely reversible and is influenced by the natural substrates and inhibitors of the enzyme. Requires Mg(2+) as cofactor.

The protein localises to the cytoplasm. It carries out the reaction 1-(5-phospho-beta-D-ribosyl)-ATP + diphosphate = 5-phospho-alpha-D-ribose 1-diphosphate + ATP. The protein operates within amino-acid biosynthesis; L-histidine biosynthesis; L-histidine from 5-phospho-alpha-D-ribose 1-diphosphate: step 1/9. With respect to regulation, feedback inhibited by histidine. Functionally, catalyzes the condensation of ATP and 5-phosphoribose 1-diphosphate to form N'-(5'-phosphoribosyl)-ATP (PR-ATP). Has a crucial role in the pathway because the rate of histidine biosynthesis seems to be controlled primarily by regulation of HisG enzymatic activity. The sequence is that of ATP phosphoribosyltransferase from Buchnera aphidicola subsp. Schlechtendalia chinensis.